Consider the following 188-residue polypeptide: Glandular kallikrein-3, submandibular (188 aa).

The region spanning 1–185 is the Peptidase S1 domain; sequence NYHVLLGQNN…FTSWIKEVMK (185 aa). N-linked (GlcNAc...) asparagine glycans are attached at residues asparagine 10 and asparagine 36. Aspartate 47 functions as the Charge relay system in the catalytic mechanism. 3 disulfides stabilise this stretch: cysteine 79/cysteine 146, cysteine 111/cysteine 125, and cysteine 136/cysteine 161. Catalysis depends on serine 140, which acts as the Charge relay system.

The protein belongs to the peptidase S1 family. Kallikrein subfamily.

It carries out the reaction Preferential cleavage of Arg-|-Xaa bonds in small molecule substrates. Highly selective action to release kallidin (lysyl-bradykinin) from kininogen involves hydrolysis of Met-|-Xaa or Leu-|-Xaa.. Glandular kallikreins cleave Met-Lys and Arg-Ser bonds in kininogen to release Lys-bradykinin. This chain is Glandular kallikrein-3, submandibular (Klk3), found in Rattus norvegicus (Rat).